Consider the following 285-residue polypeptide: Release factor glutamine methyltransferase (285 aa).

S-adenosyl-L-methionine-binding positions include Gly-124 to Gly-128, Asp-147, and Asn-190. Residue Asn-190 to Tyr-193 participates in substrate binding.

Belongs to the protein N5-glutamine methyltransferase family. PrmC subfamily.

The catalysed reaction is L-glutaminyl-[peptide chain release factor] + S-adenosyl-L-methionine = N(5)-methyl-L-glutaminyl-[peptide chain release factor] + S-adenosyl-L-homocysteine + H(+). In terms of biological role, methylates the class 1 translation termination release factors RF1/PrfA and RF2/PrfB on the glutamine residue of the universally conserved GGQ motif. This Flavobacterium psychrophilum (strain ATCC 49511 / DSM 21280 / CIP 103535 / JIP02/86) protein is Release factor glutamine methyltransferase.